The following is a 129-amino-acid chain: MINVQTVLKVADNSGAVFVSCIRLLNSSSRVGAGVGDTITVVVKKSIIKKNIKKSKEVKKGQVCSAVILRTIKGVKRWGNFFLRSSSNSVALINKYCLPIGSRLLGPVFREIRVNLKFSKIISIAQVTL.

It belongs to the universal ribosomal protein uL14 family.

Its subcellular location is the mitochondrion. The sequence is that of Large ribosomal subunit protein uL14m (RPL14) from Acanthamoeba castellanii (Amoeba).